A 538-amino-acid polypeptide reads, in one-letter code: Atos homolog protein B (538 aa).

4 disordered regions span residues 1 to 103, 130 to 149, 163 to 185, and 199 to 272; these read MRHV…GLVS, GSAT…PSSN, PDQG…QLHT, and KSPV…LGCP. A compositionally biased stretch (low complexity) spans 130–148; the sequence is GSATSSWTSGTQSTPWPSS. Positions 227–238 are enriched in pro residues; that stretch reads HTPPGPGPPGPC. Residues serine 254 and serine 255 each carry the phosphoserine modification. The tract at residues 348-430 is required for macropage invasion; that stretch reads LLGNFEESLL…VPKVGTIQVT (83 aa). The transactivation domain 1 (TAD1) stretch occupies residues 436–444; it reads QTVVKMFLV.

The protein belongs to the ATOS family.

Its subcellular location is the nucleus. Transcription regulator that may syncronize transcriptional and translational programs. This Rattus norvegicus (Rat) protein is Atos homolog protein B.